We begin with the raw amino-acid sequence, 362 residues long: Ribosomal RNA large subunit methyltransferase M (362 aa).

S-adenosyl-L-methionine is bound by residues serine 187, 220 to 223 (CPGG), aspartate 239, aspartate 259, and aspartate 276. The active-site Proton acceptor is the lysine 305.

The protein belongs to the class I-like SAM-binding methyltransferase superfamily. RNA methyltransferase RlmE family. RlmM subfamily. As to quaternary structure, monomer.

Its subcellular location is the cytoplasm. The catalysed reaction is cytidine(2498) in 23S rRNA + S-adenosyl-L-methionine = 2'-O-methylcytidine(2498) in 23S rRNA + S-adenosyl-L-homocysteine + H(+). Its function is as follows. Catalyzes the 2'-O-methylation at nucleotide C2498 in 23S rRNA. This is Ribosomal RNA large subunit methyltransferase M from Shewanella frigidimarina (strain NCIMB 400).